The primary structure comprises 191 residues: Probable nicotinate-nucleotide adenylyltransferase (191 aa).

The protein belongs to the NadD family.

The catalysed reaction is nicotinate beta-D-ribonucleotide + ATP + H(+) = deamido-NAD(+) + diphosphate. The protein operates within cofactor biosynthesis; NAD(+) biosynthesis; deamido-NAD(+) from nicotinate D-ribonucleotide: step 1/1. Its function is as follows. Catalyzes the reversible adenylation of nicotinate mononucleotide (NaMN) to nicotinic acid adenine dinucleotide (NaAD). The polypeptide is Probable nicotinate-nucleotide adenylyltransferase (Staphylococcus epidermidis (strain ATCC 12228 / FDA PCI 1200)).